We begin with the raw amino-acid sequence, 264 residues long: tRNA (guanine-N(1)-)-methyltransferase (264 aa).

S-adenosyl-L-methionine-binding positions include G125 and 145 to 150 (LGDFVL).

It belongs to the RNA methyltransferase TrmD family. Homodimer.

It localises to the cytoplasm. The enzyme catalyses guanosine(37) in tRNA + S-adenosyl-L-methionine = N(1)-methylguanosine(37) in tRNA + S-adenosyl-L-homocysteine + H(+). Specifically methylates guanosine-37 in various tRNAs. The polypeptide is tRNA (guanine-N(1)-)-methyltransferase (Burkholderia multivorans (strain ATCC 17616 / 249)).